The primary structure comprises 408 residues: Acetate kinase (408 aa).

Asn7 lines the Mg(2+) pocket. Lys14 is an ATP binding site. Position 91 (Arg91) interacts with substrate. Residue Asp148 is the Proton donor/acceptor of the active site. ATP contacts are provided by residues 208–212 (HLGNG) and 283–285 (DLR). Glu388 is a binding site for Mg(2+).

This sequence belongs to the acetokinase family. In terms of assembly, homodimer. Requires Mg(2+) as cofactor. The cofactor is Mn(2+).

It is found in the cytoplasm. It catalyses the reaction acetate + ATP = acetyl phosphate + ADP. It functions in the pathway metabolic intermediate biosynthesis; acetyl-CoA biosynthesis; acetyl-CoA from acetate: step 1/2. Its function is as follows. Catalyzes the formation of acetyl phosphate from acetate and ATP. Can also catalyze the reverse reaction. This chain is Acetate kinase, found in Borrelia hermsii (strain HS1 / DAH).